We begin with the raw amino-acid sequence, 597 residues long: Aspartate--tRNA(Asp/Asn) ligase (597 aa).

Glu-175 is a binding site for L-aspartate. An aspartate region spans residues 199 to 202; that stretch reads QLFK. An L-aspartate-binding site is contributed by Arg-221. Residues 221-223 and Gln-230 contribute to the ATP site; that span reads RDE. Position 453 (His-453) interacts with L-aspartate. Glu-487 is a binding site for ATP. An L-aspartate-binding site is contributed by Arg-494. An ATP-binding site is contributed by 539–542; it reads GWDR. The segment at 562 to 597 is disordered; the sequence is SGGGVDPLTDAPAPITPEQRKESGIDAKPKKKETKN. Over residues 579-589 the composition is skewed to basic and acidic residues; sequence EQRKESGIDAK.

This sequence belongs to the class-II aminoacyl-tRNA synthetase family. Type 1 subfamily. In terms of assembly, homodimer.

The protein localises to the cytoplasm. The enzyme catalyses tRNA(Asx) + L-aspartate + ATP = L-aspartyl-tRNA(Asx) + AMP + diphosphate. Aspartyl-tRNA synthetase with relaxed tRNA specificity since it is able to aspartylate not only its cognate tRNA(Asp) but also tRNA(Asn). Reaction proceeds in two steps: L-aspartate is first activated by ATP to form Asp-AMP and then transferred to the acceptor end of tRNA(Asp/Asn). The chain is Aspartate--tRNA(Asp/Asn) ligase from Corynebacterium kroppenstedtii (strain DSM 44385 / JCM 11950 / CIP 105744 / CCUG 35717).